Here is an 84-residue protein sequence, read N- to C-terminus: Small ribosomal subunit protein uS17 (84 aa).

This sequence belongs to the universal ribosomal protein uS17 family. As to quaternary structure, part of the 30S ribosomal subunit.

In terms of biological role, one of the primary rRNA binding proteins, it binds specifically to the 5'-end of 16S ribosomal RNA. The chain is Small ribosomal subunit protein uS17 from Legionella pneumophila (strain Paris).